Here is a 499-residue protein sequence, read N- to C-terminus: Protein-tyrosine sulfotransferase (499 aa).

Residues 1 to 9 (MRLPYRNKK) are Cytoplasmic-facing. Residues 10–30 (VTLWVLFGIIVITMFLFKFTE) traverse the membrane as a helical; Signal-anchor for type II membrane protein segment. Topologically, residues 31–499 (LRPTCLFKVD…NIMEDPMADT (469 aa)) are lumenal. Position 80–84 (80–84 (RSGTT)) interacts with 3'-phosphoadenylyl sulfate. Cysteine 98 and cysteine 158 are joined by a disulfide. Catalysis depends on glutamate 101, which acts as the Proton donor/acceptor. Residues 103–107 (RVIPR) form an interaction with peptide substrate region. 3 residues coordinate 3'-phosphoadenylyl sulfate: arginine 185, serine 193, and arginine 197. A disulfide bond links cysteine 227 and cysteine 235. Residues tyrosine 240, 287–296 (SSDQVIKPVN), and lysine 302 contribute to the 3'-phosphoadenylyl sulfate site. 2 N-linked (GlcNAc...) asparagine glycosylation sites follow: asparagine 346 and asparagine 380. 2 disordered regions span residues 362-460 (KQVL…QKPK) and 476-499 (NNINNNINNNNNNNNIMEDPMADT). 2 stretches are compositionally biased toward low complexity: residues 375–400 (TNTIINNSNNKDNNNNQYTINKIIPE) and 408–434 (HVQQQHLQQQQQQHLQQQQHQRQQQQQ). The span at 443–460 (EREAEPDREQQLLHQKPK) shows a compositional bias: basic and acidic residues. Residues 476 to 491 (NNINNNINNNNNNNNI) show a composition bias toward low complexity.

The protein belongs to the protein sulfotransferase family.

It is found in the golgi apparatus membrane. It catalyses the reaction L-tyrosyl-[protein] + 3'-phosphoadenylyl sulfate = O-sulfo-L-tyrosine-[protein] + adenosine 3',5'-bisphosphate + H(+). Catalyzes the O-sulfation of tyrosine residues within acidic motifs of polypeptides. Has a role in protein secretion. This chain is Protein-tyrosine sulfotransferase, found in Drosophila melanogaster (Fruit fly).